Consider the following 246-residue polypeptide: 3-deoxy-manno-octulosonate cytidylyltransferase (246 aa).

The protein belongs to the KdsB family.

It is found in the cytoplasm. The catalysed reaction is 3-deoxy-alpha-D-manno-oct-2-ulosonate + CTP = CMP-3-deoxy-beta-D-manno-octulosonate + diphosphate. The protein operates within nucleotide-sugar biosynthesis; CMP-3-deoxy-D-manno-octulosonate biosynthesis; CMP-3-deoxy-D-manno-octulosonate from 3-deoxy-D-manno-octulosonate and CTP: step 1/1. It functions in the pathway bacterial outer membrane biogenesis; lipopolysaccharide biosynthesis. Activates KDO (a required 8-carbon sugar) for incorporation into bacterial lipopolysaccharide in Gram-negative bacteria. This is 3-deoxy-manno-octulosonate cytidylyltransferase from Leptospira biflexa serovar Patoc (strain Patoc 1 / Ames).